A 531-amino-acid polypeptide reads, in one-letter code: Acetate CoA-transferase YdiF (531 aa).

The 5-glutamyl coenzyme A thioester intermediate role is filled by Glu333.

Belongs to the 3-oxoacid CoA-transferase family. In terms of assembly, homotetramer; dimer of dimers.

The catalysed reaction is an acyl-CoA + acetate = a carboxylate + acetyl-CoA. In terms of biological role, coA transferase having broad substrate specificity for short-chain acyl-CoA thioesters with the activity decreasing when the length of the carboxylic acid chain exceeds four carbons. Exhibits high activity with acetoacetyl-CoA, propionyl-CoA, crotonoyl-CoA or butyryl-CoA as donors, with acetate as an acceptor. When acetyl-CoA is used as the donor, propionate, acetoacetate, butyrate, isobutyrate, and 4-hydroxybutyrate can be utilized as acceptors but not isovalerate. May play a role in short-chain fatty acid metabolism in E.coli. The chain is Acetate CoA-transferase YdiF from Escherichia coli O157:H7.